The following is a 38-amino-acid chain: Photosystem II reaction center protein T (38 aa).

A helical transmembrane segment spans residues 3 to 23 (ALVYTFLLVSTLGIIFFAIFF).

This sequence belongs to the PsbT family. PSII is composed of 1 copy each of membrane proteins PsbA, PsbB, PsbC, PsbD, PsbE, PsbF, PsbH, PsbI, PsbJ, PsbK, PsbL, PsbM, PsbT, PsbY, PsbZ, Psb30/Ycf12, at least 3 peripheral proteins of the oxygen-evolving complex and a large number of cofactors. It forms dimeric complexes.

Its subcellular location is the plastid. It is found in the chloroplast thylakoid membrane. Found at the monomer-monomer interface of the photosystem II (PS II) dimer, plays a role in assembly and dimerization of PSII. PSII is a light-driven water plastoquinone oxidoreductase, using light energy to abstract electrons from H(2)O, generating a proton gradient subsequently used for ATP formation. The sequence is that of Photosystem II reaction center protein T from Secale cereale (Rye).